Consider the following 598-residue polypeptide: mRNA-capping enzyme (598 aa).

Residues 1-215 (MSQTGAPPRW…GSASAPASEP (215 aa)) are TPase. A Tyrosine-protein phosphatase domain is found at 25–183 (LPMKTMLGPR…FRRYGDVEDA (159 aa)). C126 (phosphocysteine intermediate) is an active-site residue. Residues 186-227 (APPLPEWCFDEDEEEDGEEDGSASAPASEPSSSHTGQSKKKK) form a disordered region. A compositionally biased stretch (acidic residues) spans 193-206 (CFDEDEEEDGEEDG). The span at 207 to 218 (SASAPASEPSSS) shows a compositional bias: low complexity. The GTase stretch occupies residues 233-598 (GAVFLEGVSV…PKRSANSIPQ (366 aa)). K298 serves as the catalytic N6-GMP-lysine intermediate. GTP contacts are provided by residues R303, R319, 347-349 (DGE), 462-464 (KWK), and 532-537 (RQRVDK). The segment at 575–598 (RKNPADSDLMPPPPPKRSANSIPQ) is disordered.

In the N-terminal section; belongs to the non-receptor class of the protein-tyrosine phosphatase family. The protein in the C-terminal section; belongs to the eukaryotic GTase family.

The protein resides in the nucleus. It catalyses the reaction a 5'-end triphospho-ribonucleoside in mRNA + H2O = a 5'-end diphospho-ribonucleoside in mRNA + phosphate + H(+). The catalysed reaction is a 5'-end diphospho-ribonucleoside in mRNA + GTP + H(+) = a 5'-end (5'-triphosphoguanosine)-ribonucleoside in mRNA + diphosphate. Bifunctional mRNA-capping enzyme exhibiting RNA 5'-triphosphate monophosphatase activity in the N-terminal part and mRNA guanylyltransferase activity in the C-terminal part. Catalyzes the first two steps of cap formation: by removing the gamma-phosphate from the 5'-triphosphate end of nascent mRNA to yield a diphosphate end, and by transferring the GMP moiety of GTP to the 5'-diphosphate terminus of RNA via a covalent enzyme-GMP reaction intermediate. The protein is mRNA-capping enzyme (rngtt) of Danio rerio (Zebrafish).